Consider the following 365-residue polypeptide: MAVALLEEWCKIMGVDVQKSLLVVDIPVDCGEPEIQTVLQEALKCVGSYRLLGKIFQKQDNTSVVLVELMEDTDMSVVPSEVQGKGGVWKVIFKTPNQDTEFLQRLNLFLEKEGQTVAGMFRALKHEGVSPATPPCTSPELLAHLTGQAMVHGQRPLLPVKYCKMRIFSGSTAAAPEEEPFEVWLEQATEIAKEWPIPEAEKKRWVAESLRGPALDLMHIVQADNPSISVGECLEAFKQVFGSTESRRTSQVKYLRTYQQEGEKISAYVLRLETLLRRAVEKRAIPRNIADQVRLEQVMAGANLGNVLWCRLQELKDQGPLPTFLQLMKVIREEEEEEDAYFEQESREEPGEREGSGCWNNSRNN.

The residue at position 2 (alanine 2) is an N-acetylalanine. The interval 336–365 (EEEDAYFEQESREEPGEREGSGCWNNSRNN) is disordered. A compositionally biased stretch (basic and acidic residues) spans 344-355 (QESREEPGEREG).

It belongs to the PNMA family. Expressed in the cerebrum, cerebellum and testis.

The protein resides in the nucleus. Its subcellular location is the nucleolus. The protein is Paraneoplastic antigen Ma2 homolog (Pnma2) of Mus musculus (Mouse).